Reading from the N-terminus, the 457-residue chain is MLRTVTSKTVSNQFKRSLATAVATPKAEVTQLSNGIVVATEHNPSAHTASVGVVFGSGAANENPYNNGVSNLWKNIFLSKENSAVAAKEGLALSSNISRDFQSYIVSSLPGSTDKSLDFLNQSFIQQKANLLSSSNFEATKKSVLKQVQDFEENDHPNRVLEHLHSTAFQNTPLSLPTRGTLESLENLVVADLESFANNHFLNSNAVVVGTGNIKHEDLVNSIESKNLSLQTGTKPVLKKKAAFLGSEVRLRDDTLPKAWISLAVEGEPVNSPNYFVAKLAAQIFGSYNAFEPASRLQGIKLLDNIQEYQLCDNFNHFSLSYKDSGLWGFSTATRNVTMIDDLIHFTLKQWNRLTISVTDTEVERAKSLLKLQLGQLYESGNPVNDANLLGAEVLIKGSKLSLGEAFKKIDAITVKDVKAWAGKRLWDQDIAIAGTGQIEGLLDYMRIRSDMSMMRW.

The transit peptide at 1–26 (MLRTVTSKTVSNQFKRSLATAVATPK) directs the protein to the mitochondrion.

This sequence belongs to the peptidase M16 family. UQCRC1/QCR1 subfamily. In terms of assembly, component of the ubiquinol-cytochrome c oxidoreductase (cytochrome b-c1 complex, complex III, CIII), a multisubunit enzyme composed of 10 subunits. The complex is composed of 3 respiratory subunits cytochrome b (COB), cytochrome c1 (CYT1) and Rieske protein (RIP1), 2 core protein subunits COR1 and QCR2, and 5 low-molecular weight protein subunits QCR6, QCR7, QCR8, QCR9 and QCR10. The complex exists as an obligatory dimer and forms supercomplexes (SCs) in the inner mitochondrial membrane with a monomer or a dimer of cytochrome c oxidase (complex IV, CIV), resulting in 2 different assemblies (supercomplexes III(2)IV and III(2)IV(2)). COR1 interacts with COX5A at the CIII-CIV interface.

The protein resides in the mitochondrion inner membrane. In terms of biological role, component of the ubiquinol-cytochrome c oxidoreductase, a multisubunit transmembrane complex that is part of the mitochondrial electron transport chain which drives oxidative phosphorylation. The respiratory chain contains 3 multisubunit complexes succinate dehydrogenase (complex II, CII), ubiquinol-cytochrome c oxidoreductase (cytochrome b-c1 complex, complex III, CIII) and cytochrome c oxidase (complex IV, CIV), that cooperate to transfer electrons derived from NADH and succinate to molecular oxygen, creating an electrochemical gradient over the inner membrane that drives transmembrane transport and the ATP synthase. The cytochrome b-c1 complex catalyzes electron transfer from ubiquinol to cytochrome c, linking this redox reaction to translocation of protons across the mitochondrial inner membrane, with protons being carried across the membrane as hydrogens on the quinol. In the process called Q cycle, 2 protons are consumed from the matrix, 4 protons are released into the intermembrane space and 2 electrons are passed to cytochrome c. The polypeptide is Cytochrome b-c1 complex subunit 1, mitochondrial (COR1) (Saccharomyces cerevisiae (strain ATCC 204508 / S288c) (Baker's yeast)).